The sequence spans 25 residues: Nicotinic acetylcholine receptor-binding protein Mnn-4 (25 aa).

Residues Cys-3 and Cys-20 are joined by a disulfide bond.

Belongs to the three-finger toxin family. Short-chain subfamily. Expressed by the venom gland.

Its subcellular location is the secreted. In terms of biological role, binds and may inhibit nicotinic acetylcholine receptors (nAChR). In Micrurus nigrocinctus (Central American coral snake), this protein is Nicotinic acetylcholine receptor-binding protein Mnn-4.